Here is a 545-residue protein sequence, read N- to C-terminus: Baeyer-Villiger monooxygenase (545 aa).

6 residues coordinate FAD: phenylalanine 24, aspartate 45, tryptophan 54, aspartate 65, tyrosine 71, and valine 118.

The protein belongs to the FAD-binding monooxygenase family. It depends on FAD as a cofactor.

In terms of biological role, catalyzes a Baeyer-Villiger oxidation reaction, i.e. the insertion of an oxygen atom into a carbon-carbon bond adjacent to a carbonyl, which converts ketones to esters or lactones using NADPH as an electron donor. Besides cycloalkanones, can use cyclic alpha,beta-unsaturated ketones as substrates, leading to conjugated ene-lactones. Can also act on methylated cycloalkanones and methylated cycloalkenones with high enantioselectivity in some cases. This is Baeyer-Villiger monooxygenase from Pseudooceanicola batsensis (strain ATCC BAA-863 / DSM 15984 / KCTC 12145 / HTCC2597) (Oceanicola batsensis).